The following is a 478-amino-acid chain: Chromosomal replication initiator protein DnaA (478 aa).

The tract at residues Met-1–Arg-71 is domain I, interacts with DnaA modulators. Residues Arg-71 to Ser-140 are domain II. Residues Arg-141–Ala-357 are domain III, AAA+ region. The ATP site is built by Gly-185, Gly-187, Lys-188, and Thr-189. The tract at residues Arg-358–Gly-478 is domain IV, binds dsDNA.

The protein belongs to the DnaA family. As to quaternary structure, oligomerizes as a right-handed, spiral filament on DNA at oriC.

The protein localises to the cytoplasm. Plays an essential role in the initiation and regulation of chromosomal replication. ATP-DnaA binds to the origin of replication (oriC) to initiate formation of the DNA replication initiation complex once per cell cycle. Binds the DnaA box (a 9 base pair repeat at the origin) and separates the double-stranded (ds)DNA. Forms a right-handed helical filament on oriC DNA; dsDNA binds to the exterior of the filament while single-stranded (ss)DNA is stabiized in the filament's interior. The ATP-DnaA-oriC complex binds and stabilizes one strand of the AT-rich DNA unwinding element (DUE), permitting loading of DNA polymerase. After initiation quickly degrades to an ADP-DnaA complex that is not apt for DNA replication. Binds acidic phospholipids. In Bordetella petrii (strain ATCC BAA-461 / DSM 12804 / CCUG 43448), this protein is Chromosomal replication initiator protein DnaA.